Consider the following 513-residue polypeptide: Tyrosine-protein phosphatase non-receptor type substrate 1 (513 aa).

A signal peptide spans 1-31 (MEPAGPAPGRLGPLLLCLLLSASCFCTGATG). Residues 32 to 137 (KELKVTQPEK…SSEPDTEIQS (106 aa)) form the Ig-like V-type domain. Topologically, residues 32 to 373 (KELKVTQPEK…PDNNATHNWN (342 aa)) are extracellular. 14 N-linked (GlcNAc...) asparagine glycosylation sites follow: Asn54, Asn92, Asn168, Asn180, Asn205, Asn209, Asn246, Asn271, Asn293, Asn302, Asn312, Asn320, Asn345, and Asn367. Cys55 and Cys121 are joined by a disulfide. 2 Ig-like C1-type domains span residues 149–248 (PSPP…ANLS) and 255–343 (PTVK…PAIT). A disulfide bridge connects residues Cys171 and Cys229. An intrachain disulfide couples Cys274 to Cys332. A helical membrane pass occupies residues 374-394 (VFIGVGVACALLVVLLMAALY). Residues 395–511 (LLRIKQKKAK…FSEYASVQVQ (117 aa)) are Cytoplasmic-facing. Position 440 is a phosphotyrosine; by Tyr-kinases (Tyr440). The short motif at 440–443 (YADL) is the SH2-binding element. The segment at 444–513 (NLPKEKKPAP…EYASVQVQRK (70 aa)) is disordered. Residues 450 to 455 (KPAPRA) carry the SH3-binding motif. Phosphotyrosine; by Tyr-kinases occurs at positions 464, 481, and 505. 3 consecutive short sequence motifs (SH2-binding) follow at residues 464–467 (YASI), 481–484 (YADL), and 505–508 (YASV). Residues 504–513 (EYASVQVQRK) are compositionally biased toward polar residues.

Binds PTPN11 when tyrosine-phosphorylated, except in macrophages, where it primarily binds PTPN6. Binds GRB2 vitro. Binds FGR. Binds JAK2 irrespective of its phosphorylation status and forms a stable complex. Binds SCAP1 and/or SCAP2. The resulting complex recruits FYB1. Binds PTK2B. Interacts with TRIM2. In terms of processing, N-glycosylated. Post-translationally, phosphorylated on tyrosine residues. As to expression, highly expressed in cerebral cortex, brain, spinal cord, cerebellum and spleen, and at much lower levels in kidney, thymus, heart, lung and liver. Within the cerebellum, highly expressed throughout the molecular layer, and in synaptic glomeruli in the granule cell layer. Detected in neurons of the hippocampus and dentate gyrus, and in olfactory bulb. Not detected in Purkinje cells. Highly expressed in the plexiform layers, optic fiber layer and the outer segments of the photoreceptor layer in the retina. Highly expressed in macrophages. Isoform 3 is detected at very low levels in all tissues tested.

The protein localises to the membrane. Functionally, immunoglobulin-like cell surface receptor for CD47. Acts as a docking protein and induces translocation of PTPN6, PTPN11 and other binding partners from the cytosol to the plasma membrane. Supports adhesion of cerebellar neurons, neurite outgrowth and glial cell attachment. May play a key role in intracellular signaling during synaptogenesis and in synaptic function. Involved in the negative regulation of receptor tyrosine kinase-coupled cellular responses induced by cell adhesion, growth factors or insulin. Mediates negative regulation of phagocytosis, mast cell activation and dendritic cell activation. CD47 binding prevents maturation of immature dendritic cells and inhibits cytokine production by mature dendritic cells. Plays a role in antiviral immunity and limits new world arenavirus infection by decreasing virus internalization. Receptor for THBS1. Interaction with THBS1 stimulates phosphorylation of SIRPA. In response to THBS1, involved in ROS signaling in non-phagocytic cells, stimulating NADPH oxidase-derived ROS production. This is Tyrosine-protein phosphatase non-receptor type substrate 1 (Sirpa) from Mus musculus (Mouse).